The primary structure comprises 630 residues: NUAK family SNF1-like kinase 2 (630 aa).

An N-acetylmethionine modification is found at methionine 1. Residues 57 to 307 (YEFLETLGKG…LEDVASHWWV (251 aa)) form the Protein kinase domain. Residues 63–71 (LGKGTYGKV) and lysine 85 contribute to the ATP site. The active-site Proton acceptor is aspartate 179. Threonine 212 carries the post-translational modification Phosphothreonine. Disordered regions lie at residues 361 to 504 (HVPG…RLHR) and 521 to 566 (GTAP…LDLP). Low complexity predominate over residues 464–476 (SGYYSSPEPSESG). Serine 529, serine 550, serine 553, and serine 579 each carry phosphoserine.

It belongs to the protein kinase superfamily. CAMK Ser/Thr protein kinase family. SNF1 subfamily. It depends on Mg(2+) as a cofactor. In terms of processing, phosphorylated at Thr-212 by STK11/LKB1 in complex with STE20-related adapter-alpha (STRADA) pseudo kinase and CAB39. Autophosphorylation is also possible at Thr-212. In terms of tissue distribution, expressed in liver, skin, testis, uterus, ovary, adrenal gland and brain (at protein level). Expressed in kidney, heart, skin, spleen, lung, uterus, liver and the exocrine and endocrine compartments of the human pancreas. A kinase-inactive isoform also appears to be expressed in the skin, spleen, lung, uterus, liver and testis.

It catalyses the reaction L-seryl-[protein] + ATP = O-phospho-L-seryl-[protein] + ADP + H(+). The enzyme catalyses L-threonyl-[protein] + ATP = O-phospho-L-threonyl-[protein] + ADP + H(+). With respect to regulation, activated by phosphorylation on Thr-212 by STK11 in complex with STE20-related adapter-alpha (STRAD alpha) pseudo kinase and CAB39. Functionally, stress-activated kinase involved in tolerance to glucose starvation. Induces cell-cell detachment by increasing F-actin conversion to G-actin. Expression is induced by CD95 or TNF-alpha, via NF-kappa-B. Protects cells from CD95-mediated apoptosis and is required for the increased motility and invasiveness of CD95-activated tumor cells. Phosphorylates LATS1 and LATS2. Plays a key role in neural tube closure during embryonic development through LATS2 phosphorylation and regulation of the nuclear localization of YAP1 a critical downstream regulatory target in the Hippo signaling pathway. The polypeptide is NUAK family SNF1-like kinase 2 (Rattus norvegicus (Rat)).